Consider the following 146-residue polypeptide: Anti-sigma F factor (146 aa).

The protein belongs to the anti-sigma-factor family.

The catalysed reaction is L-seryl-[protein] + ATP = O-phospho-L-seryl-[protein] + ADP + H(+). The enzyme catalyses L-threonyl-[protein] + ATP = O-phospho-L-threonyl-[protein] + ADP + H(+). Functionally, binds to sigma F and blocks its ability to form an RNA polymerase holoenzyme (E-sigma F). Phosphorylates SpoIIAA on a serine residue. This phosphorylation may enable SpoIIAA to act as an anti-anti-sigma factor that counteracts SpoIIAB and thus releases sigma F from inhibition. The sequence is that of Anti-sigma F factor from Bacillus velezensis (strain DSM 23117 / BGSC 10A6 / LMG 26770 / FZB42) (Bacillus amyloliquefaciens subsp. plantarum).